A 455-amino-acid chain; its full sequence is Acid sphingomyelinase-like phosphodiesterase 3b (455 aa).

The first 18 residues, 1–18 (MRLLAWLIFLANWGGARA), serve as a signal peptide directing secretion. Zn(2+)-binding residues include aspartate 28 and histidine 30. An intrachain disulfide couples cysteine 45 to cysteine 64. Asparagine 72 carries N-linked (GlcNAc...) asparagine glycosylation. Aspartate 93 and asparagine 134 together coordinate Zn(2+). N-linked (GlcNAc...) asparagine glycosylation occurs at asparagine 164. Positions 236, 277, and 279 each coordinate Zn(2+). N-linked (GlcNAc...) asparagine glycosylation is present at asparagine 343. Cystine bridges form between cysteine 405–cysteine 409 and cysteine 415–cysteine 428.

This sequence belongs to the acid sphingomyelinase family. In terms of assembly, interacts with TLR4, TLR7, TLR8 and TLR9. It depends on Zn(2+) as a cofactor. N-glycosylated.

It localises to the secreted. It is found in the cell membrane. Lipid-modulating phosphodiesterase. Active on the surface of macrophages and dendritic cells and strongly influences macrophage lipid composition and membrane fluidity. Acts as a negative regulator of Toll-like receptor signaling. Has in vitro phosphodiesterase activity, but the physiological substrate is unknown. Lacks activity with phosphocholine-containing lipids, but can cleave CDP-choline, and can release phosphate from ATP and ADP (in vitro). The polypeptide is Acid sphingomyelinase-like phosphodiesterase 3b (SMPDL3B) (Homo sapiens (Human)).